Consider the following 138-residue polypeptide: MRLTQGTFSFLPDLTDEQINKQLTYIVSKGLSANVEYTDDPHPRNSYWELWGLPLFDVKDASAVMYEISSCRKAKPNYYVKVNAFDNTRGIESCVMSFIVNRPANEPGFLLQRQDFEGRTMKYSLHSYATEKPEGARY.

The protein belongs to the RuBisCO small chain family. Heterohexadecamer of 8 large and 8 small subunits.

It localises to the plastid. It is found in the chloroplast. In terms of biological role, ruBisCO catalyzes two reactions: the carboxylation of D-ribulose 1,5-bisphosphate, the primary event in carbon dioxide fixation, as well as the oxidative fragmentation of the pentose substrate in the photorespiration process. Both reactions occur simultaneously and in competition at the same active site. Although the small subunit is not catalytic it is essential for maximal activity. This Pyropia dentata (Red alga) protein is Ribulose bisphosphate carboxylase small subunit.